A 501-amino-acid polypeptide reads, in one-letter code: Pentatricopeptide repeat-containing protein At2g36730 (501 aa).

PPR repeat units lie at residues 77–111, 112–146, 147–177, 178–212, 213–243, 246–276, 277–312, 313–343, and 349–379; these read TPST…GIKP, NKLT…GFDF, DVYV…MTER, NVVS…RFCP, DETT…VREL, NCRL…MVDK, NVWT…SVRP, NYVT…MEKI, and MMIH…MPFE. The tract at residues 384–462 is type E motif; that stretch reads VWRTLLSACS…IAGESCLELG (79 aa). The segment at 463 to 493 is type E(+) motif; that stretch reads GSFHRFFSGYDPRSEYVSIYELLDLFKFQLT.

This sequence belongs to the PPR family. PCMP-E subfamily.

The protein is Pentatricopeptide repeat-containing protein At2g36730 (PCMP-E44) of Arabidopsis thaliana (Mouse-ear cress).